We begin with the raw amino-acid sequence, 187 residues long: UPF0301 protein CKO_04323 (187 aa).

It belongs to the UPF0301 (AlgH) family.

This chain is UPF0301 protein CKO_04323, found in Citrobacter koseri (strain ATCC BAA-895 / CDC 4225-83 / SGSC4696).